The primary structure comprises 357 residues: DENN domain-containing protein 10 (357 aa).

Residues 1–136 (MAAVVAMDTQ…IAVLTKGICQ (136 aa)) enclose the uDENN domain. The 148-residue stretch at 152–299 (KAYLAGSIKD…PEKSDSQVIQ (148 aa)) folds into the cDENN domain. In terms of domain architecture, dDENN spans 301–357 (IALKTKEIFTHLAPFSEVSDDGGKVILNVEALKQQRFPPATENFLYHLAAAEQMLKV).

Belongs to the DENND10 family. As to quaternary structure, interacts with the coiled-coil heterodimer of CCDC22 and CCDC93; the interaction is direct. Interacts with RAB27A and RAB27B (GDP-bound forms preferentially).

The protein localises to the late endosome. In terms of biological role, guanine nucleotide exchange factor (GEF) regulating homeostasis of late endocytic pathway, including endosomal positioning, maturation and secretion, possibly through activating Rab proteins such as RAB27A and RAB27B. Promotes the exchange of GDP to GTP, converting inactive GDP-bound RAB27A and RAB27B into their active GTP-bound form. This chain is DENN domain-containing protein 10, found in Mus musculus (Mouse).